The following is a 183-amino-acid chain: MKTLIVSTVLAFITFSAQAAAFQVTSNEIKTGEQLTTSHVFSGFGCEGGNTSPSLTWSGVPEGTKSFAVTVYDPDAPTGSGWWHWTVVNIPATVTYLPVDAGRRDGTKLPTGAVQGRNDFGYAGFGGACPPKGDKPHHYQFKVWALKTEKIPVDSNSSGALVGYMLNANKIATAEITPVYEIK.

An N-terminal signal peptide occupies residues 1–21; it reads MKTLIVSTVLAFITFSAQAAA. Residues C46 and C129 are joined by a disulfide bond.

Belongs to the UPF0098 family. Homodimer.

It is found in the periplasm. In Escherichia coli (strain K12), this protein is UPF0098 protein YbcL (ybcL).